The following is a 123-amino-acid chain: Large ribosomal subunit protein bL12 (123 aa).

Belongs to the bacterial ribosomal protein bL12 family. Homodimer. Part of the ribosomal stalk of the 50S ribosomal subunit. Forms a multimeric L10(L12)X complex, where L10 forms an elongated spine to which 2 to 4 L12 dimers bind in a sequential fashion. Binds GTP-bound translation factors.

In terms of biological role, forms part of the ribosomal stalk which helps the ribosome interact with GTP-bound translation factors. Is thus essential for accurate translation. This chain is Large ribosomal subunit protein bL12, found in Desulfotalea psychrophila (strain LSv54 / DSM 12343).